A 70-amino-acid chain; its full sequence is Large ribosomal subunit protein bL28c (70 aa).

It belongs to the bacterial ribosomal protein bL28 family.

The protein resides in the plastid. Its subcellular location is the cyanelle. The sequence is that of Large ribosomal subunit protein bL28c (rpl28) from Cyanophora paradoxa.